A 156-amino-acid chain; its full sequence is Ribosomal RNA large subunit methyltransferase H (156 aa).

S-adenosyl-L-methionine is bound by residues Leu-73, Gly-104, and 123 to 128; that span reads ISSMTL.

This sequence belongs to the RNA methyltransferase RlmH family. In terms of assembly, homodimer.

It is found in the cytoplasm. It carries out the reaction pseudouridine(1915) in 23S rRNA + S-adenosyl-L-methionine = N(3)-methylpseudouridine(1915) in 23S rRNA + S-adenosyl-L-homocysteine + H(+). In terms of biological role, specifically methylates the pseudouridine at position 1915 (m3Psi1915) in 23S rRNA. This is Ribosomal RNA large subunit methyltransferase H from Burkholderia cenocepacia (strain HI2424).